The chain runs to 306 residues: Glutathione transport system permease protein GsiC (306 aa).

The Cytoplasmic portion of the chain corresponds to 1–8 (MLNYVLKR). A helical membrane pass occupies residues 9 to 29 (LLGLIPTLLIVAVLVFLFVHL). At 30–102 (LPGDPARLIA…SRFLPTLWLT (73 aa)) the chain is on the periplasmic side. One can recognise an ABC transmembrane type-1 domain in the interval 95–292 (FLPTLWLTIT…LEFILINLVV (198 aa)). A helical membrane pass occupies residues 103 to 123 (ITSMIWAVLFGMAIGIAAAVW). The Cytoplasmic portion of the chain corresponds to 124–134 (RNRWPDRLGMT). Residues 135–155 (LAVTGISFPAFALGMLLMQIF) form a helical membrane-spanning segment. Residues 156 to 168 (SVDLGWLPTVGAD) lie on the Periplasmic side of the membrane. The helical transmembrane segment at 169–189 (SWQHYILPSLTLGAAVASVMA) threads the bilayer. Topologically, residues 190–228 (RFTRSSFVDVLSEDYMRTARAKGVSETWVVLKHGLRNAM) are cytoplasmic. The chain crosses the membrane as a helical span at residues 229 to 249 (IPVVTMMGLQFGFLLGGSIVV). At 250–278 (EKVFNWPGLGRLLVDSVDMRDYPVIQAEV) the chain is on the periplasmic side. Residues 279–299 (LLFSLEFILINLVVDVLYAAI) form a helical membrane-spanning segment. Topologically, residues 300–306 (NPAIRYK) are cytoplasmic.

The protein belongs to the binding-protein-dependent transport system permease family. In terms of assembly, the complex is composed of two ATP-binding proteins (GsiA), two transmembrane proteins (GsiC and GsiD) and a solute-binding protein (GsiB).

It localises to the cell inner membrane. Its function is as follows. Part of the ABC transporter complex GsiABCD involved in glutathione import. Probably responsible for the translocation of the substrate across the membrane. In Salmonella typhimurium (strain LT2 / SGSC1412 / ATCC 700720), this protein is Glutathione transport system permease protein GsiC.